Here is an 84-residue protein sequence, read N- to C-terminus: Cell division topological specificity factor (84 aa).

The protein belongs to the MinE family.

Its function is as follows. Prevents the cell division inhibition by proteins MinC and MinD at internal division sites while permitting inhibition at polar sites. This ensures cell division at the proper site by restricting the formation of a division septum at the midpoint of the long axis of the cell. The chain is Cell division topological specificity factor from Pseudomonas fluorescens (strain SBW25).